The primary structure comprises 270 residues: uncharacterized protein (270 aa).

Residue 30 to 55 (ATGSLGRVAARALADAGARLTLAGGN) participates in NADP(+) binding. Substrate is bound at residue S157. Y171 acts as the Proton acceptor in catalysis.

It belongs to the short-chain dehydrogenases/reductases (SDR) family.

This is an uncharacterized protein from Mycobacterium tuberculosis (strain CDC 1551 / Oshkosh).